The primary structure comprises 312 residues: Ribosomal RNA small subunit methyltransferase H (312 aa).

Residues 1 to 24 (MNIMTANQGAVSPSQTESEASPPT) form a disordered region. Residues 55–57 (AGH), Asp-72, Tyr-96, Asp-117, and Gln-124 each bind S-adenosyl-L-methionine. The segment at 288 to 312 (EQVDNPRARSAKLRVGERAAAPEGS) is disordered.

The protein belongs to the methyltransferase superfamily. RsmH family.

It localises to the cytoplasm. The catalysed reaction is cytidine(1402) in 16S rRNA + S-adenosyl-L-methionine = N(4)-methylcytidine(1402) in 16S rRNA + S-adenosyl-L-homocysteine + H(+). Its function is as follows. Specifically methylates the N4 position of cytidine in position 1402 (C1402) of 16S rRNA. In Deinococcus radiodurans (strain ATCC 13939 / DSM 20539 / JCM 16871 / CCUG 27074 / LMG 4051 / NBRC 15346 / NCIMB 9279 / VKM B-1422 / R1), this protein is Ribosomal RNA small subunit methyltransferase H.